The following is a 357-amino-acid chain: Fulicin peptides (357 aa).

An N-terminal signal peptide occupies residues 1–17 (MQPTVLLILMTSCLTYQ). A propeptide spanning residues 18–119 (VIADKPKGNH…VDGSQGHLEP (102 aa)) is cleaved from the precursor. The residue at position 123 (asparagine 123) is a D-asparagine. At valine 126 the chain carries Valine amide. Positions 130 to 194 (NTLPEEAGSF…YNTMNEDEAS (65 aa)) are excised as a propeptide. 2 positions are modified to valine amide: valine 201 and valine 209. Leucine 217 and leucine 226 each carry leucine amide. Isoleucine amide is present on residues isoleucine 233 and isoleucine 242. Valine 250 and valine 259 each carry valine amide. Residues 263-298 (NQGVFTVSPSSTKISFDDNYLPYLSSVDAGDLSDVN) constitute a propeptide that is removed on maturation. Leucine 305 is subject to Leucine amide. A propeptide spanning residues 311–357 (TAEQDETSQRSNERLVALLQNTGFRKRLSRMLQNQRLVEHYPEFIGK) is cleaved from the precursor.

In terms of tissue distribution, found in central ganglia and the ventricles and atria of the heart.

Functionally, potentiates tetanic contraction of the penis retractor muscle at very low concentrations, and also shows modulatory actions on the activity of the buccal and ventricular muscles and the central ganglionic neurons. The sequence is that of Fulicin peptides from Lissachatina fulica (Giant African land snail).